The primary structure comprises 838 residues: Ras-interacting protein RIP3 (838 aa).

Disordered regions lie at residues 66-97 (VSTS…QQQA), 157-290 (KPTT…TSPK), and 305-336 (NSKT…QQQA). Low complexity-rich tracts occupy residues 67–97 (STSN…QQQA), 157–241 (KPTT…QQKP), and 248–284 (PQNI…QQQQ). A compositionally biased stretch (basic and acidic residues) spans 310–321 (QKSDKTSEKENK). Residues 441–515 (QLKVRVIEKA…KDEVLVLCPN (75 aa)) form the CRIM domain. Disordered stretches follow at residues 522–581 (KSSS…QQTQ) and 594–646 (QQQQ…GPDA). Composition is skewed to low complexity over residues 537-556 (NNNN…SNNN), 563-581 (QPQQ…QQTQ), and 594-620 (QQQQ…QPDQ). Positions 621 to 631 (VGGGGGGGGGN) are enriched in gly residues. Residues 648-717 (LVVKITLPDS…GGADLILVSR (70 aa)) enclose the RBD domain.

The protein belongs to the SIN1 family. As to quaternary structure, interacts with activated RasG. Part of a complex, TORC2, consisting of tor, lst8, piaA and ripA. Additional proteins, such as 14-3-3 and heat-shock proteins, may also belong to the TORC2 complex.

Its function is as follows. Component of a Ras-regulated pathway involved in integrating chemotaxis and signal relay pathways that are essential for aggregation. The polypeptide is Ras-interacting protein RIP3 (ripA) (Dictyostelium discoideum (Social amoeba)).